The chain runs to 447 residues: UPF0597 protein Amet_4665 (447 aa).

This sequence belongs to the UPF0597 family.

This chain is UPF0597 protein Amet_4665, found in Alkaliphilus metalliredigens (strain QYMF).